The following is a 101-amino-acid chain: Phosphoribosyl-AMP cyclohydrolase (101 aa).

Position 71 (D71) interacts with Mg(2+). C72 serves as a coordination point for Zn(2+). Mg(2+) contacts are provided by D73 and D75. C88 and C95 together coordinate Zn(2+).

It belongs to the PRA-CH family. In terms of assembly, homodimer. The cofactor is Mg(2+). Zn(2+) serves as cofactor.

It localises to the cytoplasm. It carries out the reaction 1-(5-phospho-beta-D-ribosyl)-5'-AMP + H2O = 1-(5-phospho-beta-D-ribosyl)-5-[(5-phospho-beta-D-ribosylamino)methylideneamino]imidazole-4-carboxamide. Its pathway is amino-acid biosynthesis; L-histidine biosynthesis; L-histidine from 5-phospho-alpha-D-ribose 1-diphosphate: step 3/9. In terms of biological role, catalyzes the hydrolysis of the adenine ring of phosphoribosyl-AMP. The polypeptide is Phosphoribosyl-AMP cyclohydrolase (Bacillus cereus (strain ATCC 14579 / DSM 31 / CCUG 7414 / JCM 2152 / NBRC 15305 / NCIMB 9373 / NCTC 2599 / NRRL B-3711)).